Here is a 161-residue protein sequence, read N- to C-terminus: Allophycocyanin alpha chain 2 (161 aa).

Asn-71 is modified (N4-methylasparagine). Cys-81 is a (2R,3E)-phycocyanobilin binding site.

The protein belongs to the phycobiliprotein family. As to quaternary structure, component of the phycobilisome. Heterodimer of an alpha and a beta chain. In terms of processing, contains one covalently linked bilin chromophore.

The protein localises to the cellular thylakoid membrane. In terms of biological role, light-harvesting photosynthetic bile pigment-protein from the phycobiliprotein complex. Allophycocyanin has a maximum absorption at approximately 650 nanometers. The polypeptide is Allophycocyanin alpha chain 2 (apcA2) (Microchaete diplosiphon (Fremyella diplosiphon)).